A 292-amino-acid chain; its full sequence is Ventral anterior homeobox 2 (292 aa).

The segment covering Met-1–Ala-36 has biased composition (basic and acidic residues). The interval Met-1 to Asp-74 is disordered. The span at Thr-38 to Ala-55 shows a compositional bias: polar residues. The homeobox DNA-binding region spans Pro-102–Gln-161. Residues Ala-212–Leu-241 form a disordered region.

This sequence belongs to the EMX homeobox family.

It is found in the nucleus. Its function is as follows. Transcription factor that may function in dorsoventral specification of the forebrain. Regulates the expression of Wnt signaling antagonists including the expression of a truncated TCF7L2 isoform that cannot bind CTNNB1 and acts therefore as a potent dominant-negative Wnt antagonist. Plays a crucial role in eye development and, in particular, in the specification of the ventral optic vesicle. May be a regulator of axial polarization in the retina. The protein is Ventral anterior homeobox 2 (Vax2) of Rattus norvegicus (Rat).